We begin with the raw amino-acid sequence, 618 residues long: Dihydroxy-acid dehydratase (618 aa).

Mg(2+) is bound at residue Asp81. Cys122 lines the [2Fe-2S] cluster pocket. Residues Asp123 and Lys124 each coordinate Mg(2+). The residue at position 124 (Lys124) is an N6-carboxylysine. A [2Fe-2S] cluster-binding site is contributed by Cys195. Glu491 contacts Mg(2+). The Proton acceptor role is filled by Ser517.

The protein belongs to the IlvD/Edd family. As to quaternary structure, homodimer. [2Fe-2S] cluster serves as cofactor. The cofactor is Mg(2+).

It carries out the reaction (2R)-2,3-dihydroxy-3-methylbutanoate = 3-methyl-2-oxobutanoate + H2O. The catalysed reaction is (2R,3R)-2,3-dihydroxy-3-methylpentanoate = (S)-3-methyl-2-oxopentanoate + H2O. The protein operates within amino-acid biosynthesis; L-isoleucine biosynthesis; L-isoleucine from 2-oxobutanoate: step 3/4. It functions in the pathway amino-acid biosynthesis; L-valine biosynthesis; L-valine from pyruvate: step 3/4. In terms of biological role, functions in the biosynthesis of branched-chain amino acids. Catalyzes the dehydration of (2R,3R)-2,3-dihydroxy-3-methylpentanoate (2,3-dihydroxy-3-methylvalerate) into 2-oxo-3-methylpentanoate (2-oxo-3-methylvalerate) and of (2R)-2,3-dihydroxy-3-methylbutanoate (2,3-dihydroxyisovalerate) into 2-oxo-3-methylbutanoate (2-oxoisovalerate), the penultimate precursor to L-isoleucine and L-valine, respectively. The protein is Dihydroxy-acid dehydratase of Dechloromonas aromatica (strain RCB).